The following is a 227-amino-acid chain: Urease accessory protein UreE (227 aa).

Residues 192–227 are disordered; the sequence is PHGSGLHVHAIHSHGHSHSHDHDHDHNHDHDHKHKQ. Residues 209-221 show a composition bias toward basic and acidic residues; the sequence is HSHDHDHDHNHDH.

Belongs to the UreE family.

Its subcellular location is the cytoplasm. Involved in urease metallocenter assembly. Binds nickel. Probably functions as a nickel donor during metallocenter assembly. In Yersinia bercovieri, this protein is Urease accessory protein UreE.